Consider the following 594-residue polypeptide: Zinc finger protein 37 (594 aa).

The disordered stretch occupies residues 1-253 (MATSEPAESD…KPEKAPGSGK (253 aa)). Position 3 is a phosphothreonine (Thr3). The region spanning 3–74 (TSEPAESDAV…GKKASPSSLK (72 aa)) is the KRAB domain. Residue Ser9 is modified to Phosphoserine. Over residues 10 to 33 (DAVRAKEWEQLEPVQRDVYKDTKL) the composition is skewed to basic and acidic residues. Over residues 34-46 (ENCSNPASMGNQD) the composition is skewed to polar residues. A compositionally biased stretch (basic and acidic residues) spans 89 to 111 (QQDDEHREEKQKSQSKLTKEVTL). Residues 145–158 (KSSSRGKNSNQNSD) show a composition bias toward polar residues. Composition is skewed to basic and acidic residues over residues 159 to 172 (SLKK…DHRK) and 181 to 234 (VNKD…TGEK). 12 consecutive C2H2-type zinc fingers follow at residues 255-277 (YECN…QRTH), 283-305 (YECN…QRTH), 311-324 (YECE…GHKH), 339-361 (YKCN…LRSH), 367-389 (YECK…VRTH), 395-417 (YECN…MRIH), 423-445 (FECN…QRTH), 451-473 (YKCD…MRTH), 479-501 (FECN…QRVH), 507-529 (YECV…QRTH), 535-557 (FECY…QRSH), and 563-585 (YECI…MKIH).

It belongs to the krueppel C2H2-type zinc-finger protein family. Expressed in testis and brain.

Its subcellular location is the nucleus. Functionally, may have a role in regulating spermiogenesis. The chain is Zinc finger protein 37 (Zfp37) from Mus musculus (Mouse).